The sequence spans 325 residues: NADH-quinone oxidoreductase subunit H (325 aa).

Transmembrane regions (helical) follow at residues 11–31 (ILLT…CGAF), 81–101 (FIFT…FAIV), 114–134 (IGIL…LFAG), 154–174 (VSYE…AGSF), 186–206 (MWNI…GVAV), 237–257 (FFVG…TLFF), 265–285 (LPSF…FILI), and 304–324 (ICLP…LYNA).

The protein belongs to the complex I subunit 1 family. NDH-1 is composed of 13 different subunits. Subunits NuoA, H, J, K, L, M, N constitute the membrane sector of the complex.

It localises to the cell inner membrane. It carries out the reaction a quinone + NADH + 5 H(+)(in) = a quinol + NAD(+) + 4 H(+)(out). Its function is as follows. NDH-1 shuttles electrons from NADH, via FMN and iron-sulfur (Fe-S) centers, to quinones in the respiratory chain. The immediate electron acceptor for the enzyme in this species is believed to be ubiquinone. Couples the redox reaction to proton translocation (for every two electrons transferred, four hydrogen ions are translocated across the cytoplasmic membrane), and thus conserves the redox energy in a proton gradient. This subunit may bind ubiquinone. This chain is NADH-quinone oxidoreductase subunit H, found in Proteus mirabilis (strain HI4320).